A 156-amino-acid polypeptide reads, in one-letter code: Small ribosomal subunit protein uS7 (156 aa).

Belongs to the universal ribosomal protein uS7 family. As to quaternary structure, part of the 30S ribosomal subunit. Contacts proteins S9 and S11.

In terms of biological role, one of the primary rRNA binding proteins, it binds directly to 16S rRNA where it nucleates assembly of the head domain of the 30S subunit. Is located at the subunit interface close to the decoding center, probably blocks exit of the E-site tRNA. The sequence is that of Small ribosomal subunit protein uS7 from Streptococcus sanguinis (strain SK36).